A 210-amino-acid polypeptide reads, in one-letter code: Glutathione S-transferase 4 (210 aa).

The GST N-terminal domain maps to 1 to 80 (MDFYYLPLSA…YLVEKYGKQD (80 aa)). Glutathione is bound by residues serine 9, 50–52 (HTI), and 64–66 (ESR). A GST C-terminal domain is found at 87-208 (CPKKRALINQ…AGALEMKTLI (122 aa)).

This sequence belongs to the GST superfamily. Theta family. As to quaternary structure, homodimer.

The enzyme catalyses RX + glutathione = an S-substituted glutathione + a halide anion + H(+). Its function is as follows. Conjugation of reduced glutathione to a wide number of exogenous and endogenous hydrophobic electrophiles. The sequence is that of Glutathione S-transferase 4 (Gst4) from Musca domestica (House fly).